Here is a 209-residue protein sequence, read N- to C-terminus: 3-demethoxyubiquinol 3-hydroxylase (209 aa).

Fe cation contacts are provided by E58, E88, H91, E140, E172, and H175.

It belongs to the COQ7 family. Requires Fe cation as cofactor.

Its subcellular location is the cell membrane. It carries out the reaction a 5-methoxy-2-methyl-3-(all-trans-polyprenyl)benzene-1,4-diol + AH2 + O2 = a 3-demethylubiquinol + A + H2O. The protein operates within cofactor biosynthesis; ubiquinone biosynthesis. Its function is as follows. Catalyzes the hydroxylation of 2-nonaprenyl-3-methyl-6-methoxy-1,4-benzoquinol during ubiquinone biosynthesis. In Polaromonas naphthalenivorans (strain CJ2), this protein is 3-demethoxyubiquinol 3-hydroxylase.